We begin with the raw amino-acid sequence, 437 residues long: Protein arginine methyltransferase NDUFAF7, mitochondrial (437 aa).

Residues 1–42 (MSGLARLQRLQKFGFLMVSASANRPIQRYQCSRTEKPQKRTS) constitute a mitochondrion transit peptide.

Belongs to the NDUFAF7 family.

Its subcellular location is the mitochondrion. The catalysed reaction is L-arginyl-[protein] + 2 S-adenosyl-L-methionine = N(omega),N(omega)'-dimethyl-L-arginyl-[protein] + 2 S-adenosyl-L-homocysteine + 2 H(+). In terms of biological role, arginine methyltransferase involved in the assembly or stability of mitochondrial NADH:ubiquinone oxidoreductase complex (complex I). Acts by mediating symmetric dimethylation of 'Arg-118' of ndufs2 after it assembles into the complex I, stabilizing the early intermediate complex. The sequence is that of Protein arginine methyltransferase NDUFAF7, mitochondrial from Xenopus laevis (African clawed frog).